The chain runs to 290 residues: Ribonuclease HIII (290 aa).

An RNase H type-2 domain is found at 78 to 290 (LPLIGTDEVG…FKNTEKAKNA (213 aa)). Positions 84, 85, and 187 each coordinate a divalent metal cation.

The protein belongs to the RNase HII family. RnhC subfamily. It depends on Mn(2+) as a cofactor. Mg(2+) is required as a cofactor.

The protein localises to the cytoplasm. It catalyses the reaction Endonucleolytic cleavage to 5'-phosphomonoester.. Functionally, endonuclease that specifically degrades the RNA of RNA-DNA hybrids. The sequence is that of Ribonuclease HIII from Streptococcus pneumoniae serotype 2 (strain D39 / NCTC 7466).